Reading from the N-terminus, the 1368-residue chain is MQYSFTEKKRIRKSFAKRPIVHQVPFLLATQLESFSTFLQADVPATQRKPEGLQAAFTSVFPIVSHNGFARLEFVSYALSAPAFNIKECQQRGLTYCSALRAKVRLVILDKESPNKPVVKEVKEQEVYMGEIPLMTPTGSFVINGTERVIVSQLHRSPGVFFEHDKGKTHSSGKLLFSARIIPYRGSWLDFEFDPKDILYFRVDRRRKMPVTILLKAIGLTPEQILANFFVFDNFTLMDEGAQLEFVPERLRGEVARFDITDRDGKVIVQKDKRINAKHIRDLEAAKTKFISVPEDYLLGRVLAKNVVDGETGEVIANANDEITESVLEKLREAGIKEIQTLYTNDLDQGPYISSTLRVDETTDKTAARIAIYRMMRPGEPPTEEAVEALFNRLFYSEEAYDLSKVGRMKFNRRVGRDEITGPMTLQDDDILATIKILVELRNGKGEVDDIDHLGNRRVRCVGELAENQFRAGLVRVERAVKERLGQAESENLMPHDLINSKPISSAIREFFGSSQLSQFMDQTNPLSEITHKRRVSALGPGGLTRERAGFEVRDVHPTHYGRVCPIETPEGPNIGLINSLALYAHLNEYGFLETPYRKVVDGKVTDQIDYLSAIEEGRYMIAQANAAIDDEGRLTDELVSSREAGETMMVTPDRIQYMDVAPSQIVSVAASLIPFLEHDDANRALMGSNMQRQAVPCLRPEKPVVGTGIERTCAVDSGTTVQAFRGGVVDYVDAGRIVIRVNDDEAVAGEVGVDIYNLIKYTRSNQNTNINQRPIVKMGDKVSRGDVLADGASTDLGELALGQNMLIAFMPWNGYNFEDSILISEKVVADDRYTSIHIEELNVVARDTKLGPEEITRDISNLAEVQLGRLDESGIVYIGAEVEAGDVLVGKVTPKGETQLTPEEKLLRAIFGEKASDVKDTSLRVPSGMSGTVIDVQVFTREGIQRDKRAQQIIDDELKRYRLDLNDQLRIVEGDAFQRLARMLVGKVANGGPKKLAKGTKIDQAYLEDLDHYHWFDIRLADDEAAAQLEAIKNSIEEKRHQFDLAFEEKRKKLTQGDELPPGVLKMVKVYLAVKRRLQPGDKMAGRHGNKGVVSKIVPIEDMPYMADGRPADVVLNPLGVPSRMNVGQVLEVHLGWAAKGLGWRIGEMLQRQAKIEELRAFLTKIYNESGRAEDLDSFSDDEILELAKNLREGVPFATPVFDGATEDEMAKMLDLAFPDDIAKQLDMNPSKNQVRLYDGRTGEPFERRVTVGYMHYLKLHHLVDDKMHARSTGPYSLVTQQPLGGKAQFGGQRFGEMEVWALEAYGASYVLQEMLTVKSDDVTGRTKVYENLVKGDHVIDAGMPESFNVLVKEIRSLGIDIDLDRN.

This sequence belongs to the RNA polymerase beta chain family. The RNAP catalytic core consists of 2 alpha, 1 beta, 1 beta' and 1 omega subunit. When a sigma factor is associated with the core the holoenzyme is formed, which can initiate transcription.

It carries out the reaction RNA(n) + a ribonucleoside 5'-triphosphate = RNA(n+1) + diphosphate. Functionally, DNA-dependent RNA polymerase catalyzes the transcription of DNA into RNA using the four ribonucleoside triphosphates as substrates. This chain is DNA-directed RNA polymerase subunit beta, found in Burkholderia multivorans (strain ATCC 17616 / 249).